A 311-amino-acid chain; its full sequence is MPKQHLVIATRQSALALWQAEHVKQRLEALHPGLTVELLGLTTKGDIILDTPLAKVGGKGLFVKELETAMLEGRADIAVHSMKDVPMEFPPGLGLGAILERETPMDAFVSNQYASLDELPEGAVVGTSSLRRQCQLSERRPDLKILSLRGNVNTRLAKLDAGDFDAIILAASGLKRLGFSGRIREELTPEVSLPAVGQGALGIECRLDDPEAMALIAQLQDAETTARVSAERAMNHRLQGGCQVPIAGYAEITGDQMRLRGLVGSPDGAQVLRDEVEGPVAAAEALGTELAERLLQQGAGKILEAVYGNHS.

C242 carries the post-translational modification S-(dipyrrolylmethanemethyl)cysteine.

The protein belongs to the HMBS family. As to quaternary structure, monomer. It depends on dipyrromethane as a cofactor.

The catalysed reaction is 4 porphobilinogen + H2O = hydroxymethylbilane + 4 NH4(+). It functions in the pathway porphyrin-containing compound metabolism; protoporphyrin-IX biosynthesis; coproporphyrinogen-III from 5-aminolevulinate: step 2/4. Its function is as follows. Tetrapolymerization of the monopyrrole PBG into the hydroxymethylbilane pre-uroporphyrinogen in several discrete steps. This is Porphobilinogen deaminase from Hahella chejuensis (strain KCTC 2396).